We begin with the raw amino-acid sequence, 255 residues long: Glutamate racemase (255 aa).

Substrate-binding positions include 7–8 (DS) and 39–40 (YG). C70 (proton donor/acceptor) is an active-site residue. 71–72 (NT) contributes to the substrate binding site. C181 functions as the Proton donor/acceptor in the catalytic mechanism. 182-183 (TH) provides a ligand contact to substrate.

It belongs to the aspartate/glutamate racemases family.

It catalyses the reaction L-glutamate = D-glutamate. It functions in the pathway cell wall biogenesis; peptidoglycan biosynthesis. Functionally, provides the (R)-glutamate required for cell wall biosynthesis. In Helicobacter pylori (strain P12), this protein is Glutamate racemase.